Here is a 364-residue protein sequence, read N- to C-terminus: DNA replication and repair protein RecF (364 aa).

30–37 (GANGSGKT) is an ATP binding site.

It belongs to the RecF family.

The protein localises to the cytoplasm. In terms of biological role, the RecF protein is involved in DNA metabolism; it is required for DNA replication and normal SOS inducibility. RecF binds preferentially to single-stranded, linear DNA. It also seems to bind ATP. In Sodalis glossinidius (strain morsitans), this protein is DNA replication and repair protein RecF.